We begin with the raw amino-acid sequence, 469 residues long: UDP-N-acetylmuramate--L-alanine ligase (469 aa).

112–118 (GTHGKTT) is a binding site for ATP.

This sequence belongs to the MurCDEF family.

The protein localises to the cytoplasm. The catalysed reaction is UDP-N-acetyl-alpha-D-muramate + L-alanine + ATP = UDP-N-acetyl-alpha-D-muramoyl-L-alanine + ADP + phosphate + H(+). The protein operates within cell wall biogenesis; peptidoglycan biosynthesis. Its function is as follows. Cell wall formation. In Methylibium petroleiphilum (strain ATCC BAA-1232 / LMG 22953 / PM1), this protein is UDP-N-acetylmuramate--L-alanine ligase.